The primary structure comprises 183 residues: Bifunctional protein PyrR (183 aa).

Substrate-binding positions include 46-47 (TR), Arg-87, 107-115 (DDVIFSGRT), Arg-140, and Val-164. Residues 103–115 (VVLVDDVIFSGRT) carry the PRPP-binding motif.

The protein belongs to the purine/pyrimidine phosphoribosyltransferase family. PyrR subfamily.

It carries out the reaction UMP + diphosphate = 5-phospho-alpha-D-ribose 1-diphosphate + uracil. Its function is as follows. Regulates the transcription of the pyrimidine nucleotide (pyr) operon in response to exogenous pyrimidines. Also displays a weak uracil phosphoribosyltransferase activity which is not physiologically significant. In Thermosynechococcus vestitus (strain NIES-2133 / IAM M-273 / BP-1), this protein is Bifunctional protein PyrR.